We begin with the raw amino-acid sequence, 454 residues long: MNNMHSQTTIAAIATPPGRGGVGVIRLSGPKAYDIAQKLTQKNLPEARMAGFRKFYDADGSIMDEGIVLCFPNPHSFTGEDVVELQGHGGPVIQNALLGRLFELGAIAAKAGEFSMRAFENGKMDLVQAEAIADLIDATSQAAARSAVRSLQGAFSTKINTVLEKLIYLRLHVEAAIDFPEEEIDFLADGKILALLEDVQQSVHAVQTSARQGQLLREGLQVVIAGKPNAGKSSLLNALAGVERAIVTDIAGTTRDVLHEKISLNGLPITLTDTAGLRETGDIVEKEGIRRAIKEIEQADLLLLVYDLNQGDDPLKLAQEYFSEHIEPRRLMLIGNKCDLTGQSAEISDYQGFRHITVSAKQEMGVQGLVDAITAHAGFHPEEDTFIARTRHLDAMKRTQLYLAEAREQLVVFNAGELVAESLRLAQNALGEITGDFSADDLLGKIFGSFCIGK.

(6S)-5-formyl-5,6,7,8-tetrahydrofolate-binding residues include Arg-26, Glu-84, and Lys-123. Positions 219–378 constitute a TrmE-type G domain; the sequence is GLQVVIAGKP…LVDAITAHAG (160 aa). Asn-229 is a K(+) binding site. Residues 229–234, 248–254, and 273–276 contribute to the GTP site; these read NAGKSS, TDIAGTT, and DTAG. Ser-233 serves as a coordination point for Mg(2+). K(+)-binding residues include Thr-248, Ile-250, and Thr-253. Thr-254 contacts Mg(2+). Lys-454 serves as a coordination point for (6S)-5-formyl-5,6,7,8-tetrahydrofolate.

It belongs to the TRAFAC class TrmE-Era-EngA-EngB-Septin-like GTPase superfamily. TrmE GTPase family. Homodimer. Heterotetramer of two MnmE and two MnmG subunits. The cofactor is K(+).

Its subcellular location is the cytoplasm. In terms of biological role, exhibits a very high intrinsic GTPase hydrolysis rate. Involved in the addition of a carboxymethylaminomethyl (cmnm) group at the wobble position (U34) of certain tRNAs, forming tRNA-cmnm(5)s(2)U34. The polypeptide is tRNA modification GTPase MnmE (Acinetobacter baumannii (strain ATCC 17978 / DSM 105126 / CIP 53.77 / LMG 1025 / NCDC KC755 / 5377)).